Here is a 160-residue protein sequence, read N- to C-terminus: Cyclic di-GMP-binding protein Smlt4090 (160 aa).

Positions 33, 132, 134, 135, and 160 each coordinate 3',3'-c-di-GMP.

Belongs to the YajQ family.

Cyclic di-GMP effector that significantly contributes to virulence. Binds bis-(3',5')-cyclic diguanylate (cyclic di-GMP or c-di-GMP), an important bacterial second messenger that controls a wide range of cellular processes. The chain is Cyclic di-GMP-binding protein Smlt4090 from Stenotrophomonas maltophilia (strain K279a).